The primary structure comprises 478 residues: Sporozoite surface protein P36p (478 aa).

The N-terminal stretch at 1–41 is a signal peptide; sequence MYVLVLIHMCYHFTMKRKKLFVYFIFLSFIINFNFNININF. 2 6-Cys domains span residues 42–178 and 181–326; these read VCSN…IKKT and KIKG…FDNN. 6 cysteine pairs are disulfide-bonded: cysteine 59–cysteine 71, cysteine 85–cysteine 159, cysteine 102–cysteine 157, cysteine 185–cysteine 209, cysteine 223–cysteine 302, and cysteine 243–cysteine 300. N-linked (GlcNAc...) asparagine glycosylation is found at asparagine 109 and asparagine 138. Asparagine 229, asparagine 279, and asparagine 291 each carry an N-linked (GlcNAc...) asparagine glycan. Serine 455 carries GPI-anchor amidated serine lipidation. Positions 456–478 are cleaved as a propeptide — removed in mature form; it reads SSKYILFNNFLILFIFLIYIYST.

It localises to the cell surface. The protein localises to the cell membrane. In terms of biological role, involved in sporozoite infection of hepatocytes and replication therein. The protein is Sporozoite surface protein P36p (PF52) of Plasmodium falciparum (isolate 3D7).